The chain runs to 327 residues: Ribosomal RNA large subunit methyltransferase F (327 aa).

Positions 1–31 (MTHPVTPKNTTRPTPANKPAASTLHPRNPHQ) are disordered.

It belongs to the methyltransferase superfamily. METTL16/RlmF family.

The protein resides in the cytoplasm. The catalysed reaction is adenosine(1618) in 23S rRNA + S-adenosyl-L-methionine = N(6)-methyladenosine(1618) in 23S rRNA + S-adenosyl-L-homocysteine + H(+). Its function is as follows. Specifically methylates the adenine in position 1618 of 23S rRNA. The protein is Ribosomal RNA large subunit methyltransferase F of Psychrobacter sp. (strain PRwf-1).